The primary structure comprises 229 residues: MAKKSKKMQEALKKVDATKAYSVEEAVALAKDTNIAKFDATVEVAYKLNVDPKKADQQIRGAVVLPNGTGKTQTVLVFAKGEKAKEAEAAGADFVGDDDMVAKIQGGWFDFDVVVATPDMMATVGKLGRVLGPKGLMPNPKTGTVTMDVTKAVEEVKAGKVTYRVDKAGNIHVPIGKVSFDNEKLVENFNTINDVLLKAKPSTAKGQYIKNISVTTTFGPGIHVDQASF.

Belongs to the universal ribosomal protein uL1 family. Part of the 50S ribosomal subunit.

In terms of biological role, binds directly to 23S rRNA. The L1 stalk is quite mobile in the ribosome, and is involved in E site tRNA release. Protein L1 is also a translational repressor protein, it controls the translation of the L11 operon by binding to its mRNA. The polypeptide is Large ribosomal subunit protein uL1 (Enterococcus faecalis (strain ATCC 700802 / V583)).